The chain runs to 352 residues: tRNA pseudouridine synthase D (352 aa).

D81 serves as the catalytic Nucleophile. Residues 157 to 303 (GVPNYFGGQR…MSHERRILRL (147 aa)) form the TRUD domain.

The protein belongs to the pseudouridine synthase TruD family.

The enzyme catalyses uridine(13) in tRNA = pseudouridine(13) in tRNA. Its function is as follows. Responsible for synthesis of pseudouridine from uracil-13 in transfer RNAs. The protein is tRNA pseudouridine synthase D of Pseudomonas putida (strain W619).